A 131-amino-acid polypeptide reads, in one-letter code: Inner membrane protein YecN (131 aa).

Topologically, residues 1–107 are cytoplasmic; sequence MVSALYAVLS…RWRRSGMSAT (107 aa). A helical membrane pass occupies residues 108 to 128; it reads WCALLLMVLANLWYMPWELVF. The Periplasmic portion of the chain corresponds to 129 to 131; that stretch reads SLR.

It localises to the cell inner membrane. This chain is Inner membrane protein YecN (yecN), found in Escherichia coli O6:H1 (strain CFT073 / ATCC 700928 / UPEC).